Consider the following 122-residue polypeptide: Large ribosomal subunit protein uL14 (122 aa).

It belongs to the universal ribosomal protein uL14 family. In terms of assembly, part of the 50S ribosomal subunit. Forms a cluster with proteins L3 and L19. In the 70S ribosome, L14 and L19 interact and together make contacts with the 16S rRNA in bridges B5 and B8.

Binds to 23S rRNA. Forms part of two intersubunit bridges in the 70S ribosome. The chain is Large ribosomal subunit protein uL14 from Thermomicrobium roseum (strain ATCC 27502 / DSM 5159 / P-2).